A 288-amino-acid polypeptide reads, in one-letter code: Oxaloacetate decarboxylase (288 aa).

S47 is a binding site for substrate. D85 contacts Mg(2+). R156 and H232 together coordinate substrate.

It belongs to the isocitrate lyase/PEP mutase superfamily. Oxaloacetate decarboxylase family. As to quaternary structure, homotetramer; dimer of dimers. It depends on Mg(2+) as a cofactor.

It carries out the reaction oxaloacetate + H(+) = pyruvate + CO2. In terms of biological role, catalyzes the decarboxylation of oxaloacetate into pyruvate. Seems to play a role in maintaining cellular concentrations of bicarbonate and pyruvate. The sequence is that of Oxaloacetate decarboxylase from Bradyrhizobium sp. (strain BTAi1 / ATCC BAA-1182).